The primary structure comprises 388 residues: Putative nickel insertion protein (388 aa).

Belongs to the LarC family.

The polypeptide is Putative nickel insertion protein (Syntrophobacter fumaroxidans (strain DSM 10017 / MPOB)).